Consider the following 842-residue polypeptide: Alpha-glucan phosphorylase, H isozyme (842 aa).

Lys688 is modified (N6-(pyridoxal phosphate)lysine).

It belongs to the glycogen phosphorylase family. The cofactor is pyridoxal 5'-phosphate.

The protein resides in the cytoplasm. It catalyses the reaction [(1-&gt;4)-alpha-D-glucosyl](n) + phosphate = [(1-&gt;4)-alpha-D-glucosyl](n-1) + alpha-D-glucose 1-phosphate. In terms of biological role, phosphorylase is an important allosteric enzyme in carbohydrate metabolism. Enzymes from different sources differ in their regulatory mechanisms and in their natural substrates. However, all known phosphorylases share catalytic and structural properties. Functionally, the H isoform exhibits higher affinity for branched polyglucans such as soluble starch or glycogen. This Vicia faba (Broad bean) protein is Alpha-glucan phosphorylase, H isozyme.